A 101-amino-acid chain; its full sequence is UPF0235 protein MmarC6_1603 (101 aa).

This sequence belongs to the UPF0235 family.

In Methanococcus maripaludis (strain C6 / ATCC BAA-1332), this protein is UPF0235 protein MmarC6_1603.